Consider the following 153-residue polypeptide: Ribosome maturation factor RimP (153 aa).

It belongs to the RimP family.

It localises to the cytoplasm. Its function is as follows. Required for maturation of 30S ribosomal subunits. This is Ribosome maturation factor RimP from Clostridium botulinum (strain 657 / Type Ba4).